A 440-amino-acid chain; its full sequence is Chromosome partition protein MukF (440 aa).

The segment at 208-236 (LSETSGTLRELQDTLEAAGDKLQANLLRI) is leucine-zipper.

It belongs to the MukF family. Interacts, and probably forms a ternary complex, with MukE and MukB via its C-terminal region. The complex formation is stimulated by calcium or magnesium. It is required for an interaction between MukE and MukB.

It is found in the cytoplasm. The protein resides in the nucleoid. Functionally, involved in chromosome condensation, segregation and cell cycle progression. May participate in facilitating chromosome segregation by condensation DNA from both sides of a centrally located replisome during cell division. Not required for mini-F plasmid partitioning. Probably acts via its interaction with MukB and MukE. Overexpression results in anucleate cells. It has a calcium binding activity. The sequence is that of Chromosome partition protein MukF from Escherichia coli O157:H7.